The primary structure comprises 145 residues: UPF0201 protein SSO1042 (145 aa).

Belongs to the UPF0201 family.

This is UPF0201 protein SSO1042 from Saccharolobus solfataricus (strain ATCC 35092 / DSM 1617 / JCM 11322 / P2) (Sulfolobus solfataricus).